A 313-amino-acid chain; its full sequence is 4-diphosphocytidyl-2-C-methyl-D-erythritol kinase (313 aa).

The active site involves lysine 29. 113–123 (PMGGGVGGGSS) provides a ligand contact to ATP. Aspartate 155 is a catalytic residue.

This sequence belongs to the GHMP kinase family. IspE subfamily.

It carries out the reaction 4-CDP-2-C-methyl-D-erythritol + ATP = 4-CDP-2-C-methyl-D-erythritol 2-phosphate + ADP + H(+). It functions in the pathway isoprenoid biosynthesis; isopentenyl diphosphate biosynthesis via DXP pathway; isopentenyl diphosphate from 1-deoxy-D-xylulose 5-phosphate: step 3/6. Functionally, catalyzes the phosphorylation of the position 2 hydroxy group of 4-diphosphocytidyl-2C-methyl-D-erythritol. The chain is 4-diphosphocytidyl-2-C-methyl-D-erythritol kinase from Haemophilus influenzae (strain 86-028NP).